Consider the following 208-residue polypeptide: uncharacterized protein (208 aa).

This is an uncharacterized protein from Methanocaldococcus jannaschii (strain ATCC 43067 / DSM 2661 / JAL-1 / JCM 10045 / NBRC 100440) (Methanococcus jannaschii).